Reading from the N-terminus, the 273-residue chain is tRNA pseudouridine synthase B (273 aa).

Residue Asp38 is the Nucleophile of the active site.

Belongs to the pseudouridine synthase TruB family. Type 1 subfamily.

It catalyses the reaction uridine(55) in tRNA = pseudouridine(55) in tRNA. Its function is as follows. Responsible for synthesis of pseudouridine from uracil-55 in the psi GC loop of transfer RNAs. This Sulfurimonas denitrificans (strain ATCC 33889 / DSM 1251) (Thiomicrospira denitrificans (strain ATCC 33889 / DSM 1251)) protein is tRNA pseudouridine synthase B.